We begin with the raw amino-acid sequence, 301 residues long: Phosducin-like protein (301 aa).

Position 2 is an N-acetylthreonine (Thr-2). Residues Tyr-17–Lys-60 are disordered. Phosphoserine is present on residues Ser-20, Ser-25, Ser-226, Ser-293, and Ser-296. In terms of domain architecture, Phosducin spans Ala-36–Glu-299. A thioredoxin fold region spans residues Phe-158–Asp-301.

This sequence belongs to the phosducin family. As to quaternary structure, forms a complex with the beta and gamma subunits of the GTP-binding protein, transducin. Interacts with the CCT chaperonin complex.

The protein resides in the cell projection. The protein localises to the cilium. Its function is as follows. Functions as a co-chaperone for CCT in the assembly of heterotrimeric G protein complexes, facilitates the assembly of both Gbeta-Ggamma and RGS-Gbeta5 heterodimers. Also acts as a positive regulator of hedgehog signaling and regulates ciliary function. The protein is Phosducin-like protein (Pdcl) of Mus musculus (Mouse).